Consider the following 1510-residue polypeptide: Chromosome partition protein MukB (1510 aa).

Residue 75 to 82 coordinates ATP; sequence GGNGAGKS. The stretch at 346–706 forms a coiled coil; sequence QHRLVDLSRE…LDEQISRLSQ (361 aa). Positions 707–824 are flexible hinge; that stretch reads PDGSEDPRLN…EIPLFGCAAR (118 aa). Coiled coils occupy residues 825–1154 and 1248–1304; these read EKRL…AAKV and IDAI…LQNI.

It belongs to the SMC family. MukB subfamily. Homodimerization via its hinge domain. Binds to DNA via its C-terminal region. Interacts, and probably forms a ternary complex, with MukE and MukF via its C-terminal region. The complex formation is stimulated by calcium or magnesium. Interacts with tubulin-related protein FtsZ.

It is found in the cytoplasm. Its subcellular location is the nucleoid. Plays a central role in chromosome condensation, segregation and cell cycle progression. Functions as a homodimer, which is essential for chromosome partition. Involved in negative DNA supercoiling in vivo, and by this means organize and compact chromosomes. May achieve or facilitate chromosome segregation by condensation DNA from both sides of a centrally located replisome during cell division. This chain is Chromosome partition protein MukB, found in Haemophilus influenzae (strain ATCC 51907 / DSM 11121 / KW20 / Rd).